Reading from the N-terminus, the 243-residue chain is Adenosine 5'-phosphosulfate reductase (243 aa).

Residues Cys-126, Cys-127, Cys-209, and Cys-212 each contribute to the [4Fe-4S] cluster site. The Nucleophile; cysteine thiosulfonate intermediate role is filled by Cys-235.

It belongs to the PAPS reductase family. CysH subfamily. Requires [4Fe-4S] cluster as cofactor.

The protein localises to the cytoplasm. The enzyme catalyses [thioredoxin]-disulfide + sulfite + AMP + 2 H(+) = adenosine 5'-phosphosulfate + [thioredoxin]-dithiol. It participates in sulfur metabolism; hydrogen sulfide biosynthesis; sulfite from sulfate. In terms of biological role, catalyzes the formation of sulfite from adenosine 5'-phosphosulfate (APS) using thioredoxin as an electron donor. The polypeptide is Adenosine 5'-phosphosulfate reductase (Staphylococcus epidermidis (strain ATCC 12228 / FDA PCI 1200)).